Here is a 233-residue protein sequence, read N- to C-terminus: Demethylmenaquinone methyltransferase (233 aa).

Residues threonine 58, aspartate 79, and 106-107 each bind S-adenosyl-L-methionine; that span reads NA.

Belongs to the class I-like SAM-binding methyltransferase superfamily. MenG/UbiE family.

It catalyses the reaction a 2-demethylmenaquinol + S-adenosyl-L-methionine = a menaquinol + S-adenosyl-L-homocysteine + H(+). It functions in the pathway quinol/quinone metabolism; menaquinone biosynthesis; menaquinol from 1,4-dihydroxy-2-naphthoate: step 2/2. Functionally, methyltransferase required for the conversion of demethylmenaquinol (DMKH2) to menaquinol (MKH2). The sequence is that of Demethylmenaquinone methyltransferase from Bacillus velezensis (strain DSM 23117 / BGSC 10A6 / LMG 26770 / FZB42) (Bacillus amyloliquefaciens subsp. plantarum).